The following is a 264-amino-acid chain: Thymidylate synthase (264 aa).

Arg-21 provides a ligand contact to dUMP. Residue His-51 coordinates (6R)-5,10-methylene-5,6,7,8-tetrahydrofolate. 126–127 (RR) lines the dUMP pocket. Cys-146 functions as the Nucleophile in the catalytic mechanism. DUMP-binding positions include 166–169 (RSAD), Asn-177, and 207–209 (HLY). Position 169 (Asp-169) interacts with (6R)-5,10-methylene-5,6,7,8-tetrahydrofolate. A (6R)-5,10-methylene-5,6,7,8-tetrahydrofolate-binding site is contributed by Ala-263.

The protein belongs to the thymidylate synthase family. Bacterial-type ThyA subfamily. Homodimer.

The protein resides in the cytoplasm. It carries out the reaction dUMP + (6R)-5,10-methylene-5,6,7,8-tetrahydrofolate = 7,8-dihydrofolate + dTMP. The protein operates within pyrimidine metabolism; dTTP biosynthesis. In terms of biological role, catalyzes the reductive methylation of 2'-deoxyuridine-5'-monophosphate (dUMP) to 2'-deoxythymidine-5'-monophosphate (dTMP) while utilizing 5,10-methylenetetrahydrofolate (mTHF) as the methyl donor and reductant in the reaction, yielding dihydrofolate (DHF) as a by-product. This enzymatic reaction provides an intracellular de novo source of dTMP, an essential precursor for DNA biosynthesis. The sequence is that of Thymidylate synthase from Rhizobium johnstonii (strain DSM 114642 / LMG 32736 / 3841) (Rhizobium leguminosarum bv. viciae).